A 379-amino-acid chain; its full sequence is Chaperone protein DnaJ (379 aa).

One can recognise a J domain in the interval 5–70 (DFYEVLGVSR…QKRSAYDQYG (66 aa)). The segment at 134–212 (GCDKEIEVPT…CHGEGRVHKT (79 aa)) adopts a CR-type zinc-finger fold. Zn(2+) is bound by residues Cys-147, Cys-150, Cys-164, Cys-167, Cys-186, Cys-189, Cys-200, and Cys-203. CXXCXGXG motif repeat units lie at residues 147–154 (CDPCEGTG), 164–171 (CSTCHGQG), 186–193 (CPTCHGKG), and 200–207 (CNSCHGEG).

This sequence belongs to the DnaJ family. Homodimer. Zn(2+) serves as cofactor.

The protein resides in the cytoplasm. Participates actively in the response to hyperosmotic and heat shock by preventing the aggregation of stress-denatured proteins and by disaggregating proteins, also in an autonomous, DnaK-independent fashion. Unfolded proteins bind initially to DnaJ; upon interaction with the DnaJ-bound protein, DnaK hydrolyzes its bound ATP, resulting in the formation of a stable complex. GrpE releases ADP from DnaK; ATP binding to DnaK triggers the release of the substrate protein, thus completing the reaction cycle. Several rounds of ATP-dependent interactions between DnaJ, DnaK and GrpE are required for fully efficient folding. Also involved, together with DnaK and GrpE, in the DNA replication of plasmids through activation of initiation proteins. This is Chaperone protein DnaJ from Aliivibrio fischeri (strain ATCC 700601 / ES114) (Vibrio fischeri).